We begin with the raw amino-acid sequence, 193 residues long: Ion-translocating oxidoreductase complex subunit A (193 aa).

Transmembrane regions (helical) follow at residues 5–25, 39–59, 72–92, 102–122, 134–154, and 170–190; these read LLLL…FLGL, VGMG…AYLV, LSTL…EMVI, ILGI…LALL, VVYG…FASL, and IAIG…FTGL.

It belongs to the NqrDE/RnfAE family. As to quaternary structure, the complex is composed of six subunits: RnfA, RnfB, RnfC, RnfD, RnfE and RnfG.

The protein resides in the cell inner membrane. Functionally, part of a membrane-bound complex that couples electron transfer with translocation of ions across the membrane. The polypeptide is Ion-translocating oxidoreductase complex subunit A (Tolumonas auensis (strain DSM 9187 / NBRC 110442 / TA 4)).